The chain runs to 222 residues: 7-cyano-7-deazaguanine synthase (222 aa).

7-17 contributes to the ATP binding site; sequence LSGGMDSAVAT. Zn(2+) contacts are provided by C188, C196, C199, and C202.

The protein belongs to the QueC family. Zn(2+) serves as cofactor.

The enzyme catalyses 7-carboxy-7-deazaguanine + NH4(+) + ATP = 7-cyano-7-deazaguanine + ADP + phosphate + H2O + H(+). It functions in the pathway purine metabolism; 7-cyano-7-deazaguanine biosynthesis. Functionally, catalyzes the ATP-dependent conversion of 7-carboxy-7-deazaguanine (CDG) to 7-cyano-7-deazaguanine (preQ(0)). The chain is 7-cyano-7-deazaguanine synthase from Methanothermobacter thermautotrophicus (strain ATCC 29096 / DSM 1053 / JCM 10044 / NBRC 100330 / Delta H) (Methanobacterium thermoautotrophicum).